Here is a 257-residue protein sequence, read N- to C-terminus: 5-oxoprolinase subunit A (257 aa).

The protein belongs to the LamB/PxpA family. As to quaternary structure, forms a complex composed of PxpA, PxpB and PxpC.

It carries out the reaction 5-oxo-L-proline + ATP + 2 H2O = L-glutamate + ADP + phosphate + H(+). In terms of biological role, catalyzes the cleavage of 5-oxoproline to form L-glutamate coupled to the hydrolysis of ATP to ADP and inorganic phosphate. The chain is 5-oxoprolinase subunit A from Natranaerobius thermophilus (strain ATCC BAA-1301 / DSM 18059 / JW/NM-WN-LF).